A 235-amino-acid chain; its full sequence is Ribonuclease P protein component 3 (235 aa).

This sequence belongs to the eukaryotic/archaeal RNase P protein component 3 family. Consists of a catalytic RNA component and at least 4-5 protein subunits.

Its subcellular location is the cytoplasm. The enzyme catalyses Endonucleolytic cleavage of RNA, removing 5'-extranucleotides from tRNA precursor.. Functionally, part of ribonuclease P, a protein complex that generates mature tRNA molecules by cleaving their 5'-ends. In Haloarcula marismortui (strain ATCC 43049 / DSM 3752 / JCM 8966 / VKM B-1809) (Halobacterium marismortui), this protein is Ribonuclease P protein component 3.